The sequence spans 394 residues: Ornithine aminotransferase 1 (394 aa).

Lys252 carries the post-translational modification N6-(pyridoxal phosphate)lysine.

It belongs to the class-III pyridoxal-phosphate-dependent aminotransferase family. OAT subfamily. The cofactor is pyridoxal 5'-phosphate.

It localises to the cytoplasm. It carries out the reaction a 2-oxocarboxylate + L-ornithine = L-glutamate 5-semialdehyde + an L-alpha-amino acid. It participates in amino-acid biosynthesis; L-proline biosynthesis; L-glutamate 5-semialdehyde from L-ornithine: step 1/1. Its function is as follows. Catalyzes the interconversion of ornithine to glutamate semialdehyde. The chain is Ornithine aminotransferase 1 from Staphylococcus aureus (strain Mu50 / ATCC 700699).